The primary structure comprises 213 residues: MRMNEPVDAQPAPSFLPMSRRFRGYLPVVVDVETGGFDWNKHALLEIACVPIEMDTDGRFFPGETASAHLVPAPGLEIDPKSLEITGIVLDHPFRFAKQEKDALDHVFAPVRAAVKKYGCQRAILVGHNAHFDLNFLNAAVARVGHKRNPFHPFSVFDTVTLAGVAYGQTVLARAAQAAGLDWNAADAHSAVYDTEQTARLFCKIANAWPGPV.

Positions 28–202 constitute an Exonuclease domain; sequence VVVDVETGGF…YDTEQTARLF (175 aa). Mg(2+) contacts are provided by Asp-31, Glu-33, His-189, and Asp-194. His-189 functions as the Proton donor/acceptor in the catalytic mechanism.

Belongs to the RNase T family. As to quaternary structure, homodimer. Mg(2+) serves as cofactor.

In terms of biological role, trims short 3' overhangs of a variety of RNA species, leaving a one or two nucleotide 3' overhang. Responsible for the end-turnover of tRNA: specifically removes the terminal AMP residue from uncharged tRNA (tRNA-C-C-A). Also appears to be involved in tRNA biosynthesis. This is Ribonuclease T from Xanthomonas euvesicatoria pv. vesicatoria (strain 85-10) (Xanthomonas campestris pv. vesicatoria).